A 116-amino-acid chain; its full sequence is Non-specific lipid-transfer protein (116 aa).

The signal sequence occupies residues 1–22; that stretch reads MSLKLACVVVLCMVVGAPLAQG. Cystine bridges form between cysteine 36-cysteine 52, cysteine 53-cysteine 98, and cysteine 73-cysteine 112.

This sequence belongs to the plant LTP family.

Plant non-specific lipid-transfer proteins transfer phospholipids as well as galactolipids across membranes. May play a role in wax or cutin deposition in the cell walls of expanding epidermal cells and certain secretory tissues. In Gossypium hirsutum (Upland cotton), this protein is Non-specific lipid-transfer protein.